The primary structure comprises 294 residues: tRNA dimethylallyltransferase (294 aa).

11–18 (GPTAVGKT) contacts ATP. Residue 13–18 (TAVGKT) coordinates substrate. The tract at residues 36–39 (DSQQ) is interaction with substrate tRNA.

Belongs to the IPP transferase family. Monomer. It depends on Mg(2+) as a cofactor.

The catalysed reaction is adenosine(37) in tRNA + dimethylallyl diphosphate = N(6)-dimethylallyladenosine(37) in tRNA + diphosphate. Functionally, catalyzes the transfer of a dimethylallyl group onto the adenine at position 37 in tRNAs that read codons beginning with uridine, leading to the formation of N6-(dimethylallyl)adenosine (i(6)A). This is tRNA dimethylallyltransferase from Lactococcus lactis subsp. cremoris (strain SK11).